We begin with the raw amino-acid sequence, 434 residues long: Enolase (434 aa).

Q163 contributes to the (2R)-2-phosphoglycerate binding site. E205 functions as the Proton donor in the catalytic mechanism. Positions 242, 291, and 318 each coordinate Mg(2+). The (2R)-2-phosphoglycerate site is built by K343, R372, S373, and K394. K343 (proton acceptor) is an active-site residue.

This sequence belongs to the enolase family. It depends on Mg(2+) as a cofactor.

The protein resides in the cytoplasm. The protein localises to the secreted. It localises to the cell surface. The catalysed reaction is (2R)-2-phosphoglycerate = phosphoenolpyruvate + H2O. The protein operates within carbohydrate degradation; glycolysis; pyruvate from D-glyceraldehyde 3-phosphate: step 4/5. In terms of biological role, catalyzes the reversible conversion of 2-phosphoglycerate (2-PG) into phosphoenolpyruvate (PEP). It is essential for the degradation of carbohydrates via glycolysis. In Streptococcus intermedius, this protein is Enolase.